A 513-amino-acid chain; its full sequence is Maturase K (513 aa).

Belongs to the intron maturase 2 family. MatK subfamily.

It localises to the plastid. The protein localises to the chloroplast. In terms of biological role, usually encoded in the trnK tRNA gene intron. Probably assists in splicing its own and other chloroplast group II introns. This Cyrilla racemiflora (Swamp titi) protein is Maturase K.